The following is a 728-amino-acid chain: Catalase-peroxidase (728 aa).

The segment at residues 91–218 (WHSAGTYRTA…LAAVQMGLIY (128 aa)) is a cross-link (tryptophyl-tyrosyl-methioninium (Trp-Tyr) (with M-244)). Catalysis depends on His-92, which acts as the Proton acceptor. Positions 218-244 (YVNPEGPDGNPDPVAAARDIRDTFARM) form a cross-link, tryptophyl-tyrosyl-methioninium (Tyr-Met) (with W-91). Residue His-259 coordinates heme b.

The protein belongs to the peroxidase family. Peroxidase/catalase subfamily. As to quaternary structure, homodimer or homotetramer. Heme b serves as cofactor. In terms of processing, formation of the three residue Trp-Tyr-Met cross-link is important for the catalase, but not the peroxidase activity of the enzyme.

It catalyses the reaction H2O2 + AH2 = A + 2 H2O. The catalysed reaction is 2 H2O2 = O2 + 2 H2O. Bifunctional enzyme with both catalase and broad-spectrum peroxidase activity. This is Catalase-peroxidase from Burkholderia mallei (strain NCTC 10247).